We begin with the raw amino-acid sequence, 1073 residues long: MPKRTDIKSILILGAGPIVIGQACEFDYSGAQACKALREEGYRVILVNSNPATIMTDPEMADATYIEPIHWEVVRKIIEKERPDAVLPTMGGQTALNCALELERQGVLEEFGVTMIGATADAIDKAEDRRRFDVAMKKIGLETARSGIAHTMEEALAVAADVGFPCIIRPSFTMGGSGGGIAYNREEFEEICARGLDLSPTKELLIDESLIGWKEYEMEVVRDKNDNCIIVCSIENFDAMGIHTGDSITVAPAQTLTDKEYQIMRNASMAVLREIGVETGGSNVQFAVNPKNGRLIVIEMNPRVSRSSALASKATGFPIAKVAAKLAVGYTLDELMNDITGGRTPASFEPSIDYVVTKIPRFNFEKFAGANDRLTTQMKSVGEVMAIGRTQQESLQKALRGLEVGATGFDPKVSLDDPEALTKIRRELKDAGADRIWYIADAFRAGLSVDGVFNLTNIDRWFLVQIEELVRLEEKVAEVGITGLNADFLRQLKRKGFADARLAKLAGVREAEIRKLRDQYDLHPVYKRVDTCAAEFATDTAYMYSTYEEECEANPSTDREKIMVLGGGPNRIGQGIEFDYCCVHASLALREDGYETIMVNCNPETVSTDYDTSDRLYFEPVTLEDVLEIVRIEKPKGVIVQYGGQTPLKLARALEAAGVPVIGTSPDAIDRAEDRERFQHAVERLKLKQPANATVTAIEMAVEKAKEIGYPLVVRPSYVLGGRAMEIVYDEADLRRYFQTAVSVSNDAPVLLDHFLDDAVEVDVDAICDGEMVLIGGIMEHIEQAGVHSGDSACSLPAYTLSQEIQDVMRQQVQKLAFELQVRGLMNVQFAVKNNEVYLIEVNPRAARTVPFVSKATGVPLAKVAARVMAGKSLAEQGVTKEVIPPYYSVKEVVLPFNKFPGVDPLLGPEMRSTGEVMGVGRTFAEAFAKAQLGSNSTMKKHGRALLSVREGDKERVVDLAAKLLKQGFELDATHGTAIVLGEAGINPRLVNKVHEGRPHIQDRIKNGEYTYIINTTSGRRAIEDSRVIRRSALQYKVHYDTTLNGGFATAMALNADATEKVISVQEMHAQIK.

The tract at residues 2–403 (PKRTDIKSIL…SLQKALRGLE (402 aa)) is carboxyphosphate synthetic domain. 12 residues coordinate ATP: arginine 129, arginine 169, glycine 175, glycine 176, glutamate 208, leucine 210, glutamate 215, glycine 241, isoleucine 242, histidine 243, glutamine 285, and glutamate 299. One can recognise an ATP-grasp 1 domain in the interval 133 to 328 (DVAMKKIGLE…IAKVAAKLAV (196 aa)). The Mg(2+) site is built by glutamine 285, glutamate 299, and asparagine 301. Mn(2+)-binding residues include glutamine 285, glutamate 299, and asparagine 301. An oligomerization domain region spans residues 404–553 (VGATGFDPKV…YSTYEEECEA (150 aa)). Positions 554–936 (NPSTDREKIM…AFAKAQLGSN (383 aa)) are carbamoyl phosphate synthetic domain. Positions 679–870 (QHAVERLKLK…LAKVAARVMA (192 aa)) constitute an ATP-grasp 2 domain. Arginine 715, histidine 754, leucine 756, glutamate 761, glycine 786, valine 787, histidine 788, serine 789, glutamine 829, and glutamate 841 together coordinate ATP. Positions 829, 841, and 843 each coordinate Mg(2+). Mn(2+) contacts are provided by glutamine 829, glutamate 841, and asparagine 843. The MGS-like domain maps to 937 to 1073 (STMKKHGRAL…SVQEMHAQIK (137 aa)). Residues 937-1073 (STMKKHGRAL…SVQEMHAQIK (137 aa)) form an allosteric domain region.

Belongs to the CarB family. In terms of assembly, composed of two chains; the small (or glutamine) chain promotes the hydrolysis of glutamine to ammonia, which is used by the large (or ammonia) chain to synthesize carbamoyl phosphate. Tetramer of heterodimers (alpha,beta)4. Requires Mg(2+) as cofactor. Mn(2+) is required as a cofactor.

It catalyses the reaction hydrogencarbonate + L-glutamine + 2 ATP + H2O = carbamoyl phosphate + L-glutamate + 2 ADP + phosphate + 2 H(+). It carries out the reaction hydrogencarbonate + NH4(+) + 2 ATP = carbamoyl phosphate + 2 ADP + phosphate + 2 H(+). Its pathway is amino-acid biosynthesis; L-arginine biosynthesis; carbamoyl phosphate from bicarbonate: step 1/1. It functions in the pathway pyrimidine metabolism; UMP biosynthesis via de novo pathway; (S)-dihydroorotate from bicarbonate: step 1/3. In terms of biological role, large subunit of the glutamine-dependent carbamoyl phosphate synthetase (CPSase). CPSase catalyzes the formation of carbamoyl phosphate from the ammonia moiety of glutamine, carbonate, and phosphate donated by ATP, constituting the first step of 2 biosynthetic pathways, one leading to arginine and/or urea and the other to pyrimidine nucleotides. The large subunit (synthetase) binds the substrates ammonia (free or transferred from glutamine from the small subunit), hydrogencarbonate and ATP and carries out an ATP-coupled ligase reaction, activating hydrogencarbonate by forming carboxy phosphate which reacts with ammonia to form carbamoyl phosphate. The protein is Carbamoyl phosphate synthase large chain of Escherichia coli (strain K12).